The following is a 944-amino-acid chain: MKGPSIVVKGARAHNLKGVDIELPKNKLIVMTGLSGSGKSSLAFDTIYAEGQRRYVESLSAYARQFLGQMDKPDVDTIEGLSPAISIDQKTTSKNPRSTVATVTEIYDYIRLLYARVGKPYCPYHGIEIESQTVQQMVDRILELEERTKIQLLAPVISHRKGSHEKLIEDIGKKGYVRLRVDDEIVDVNEVPQLDKNKNHTIEVVVDRLVVKDGIETRLADSIETALELAEGNLTVDVINGEELKFSENHACPICGFSIGELEPRMFSFNSPFGACPTCDGLGQKLKVDLDLVIPDKNKTLNEGAIEPWEPTSSDFYPTLLKRVCEVYKINMDKPYKKLTDRQKNILMNGSGEKEIEFTFTQRNGGTRKRKMVFEGVVPNIDRRYHESPSEYTREMMSKYMTELPCETCHGKRLSKEALSVYVGDYNIGEVVEYSIKNALYYFENLKLSDQDKSIADQILKEIISRLSFLNNVGLEYLTLDRSSGTLSGGEAQRIRLATQIGSRLTGVLYVLDEPSIGLHQRDNDRLINTLKEMRDLGNTLIVVEHDDDTMRAADYLVDVGPGAGNHGGEVVSSGTPNKVMKDKKSLTGQYLSGKKRIEVPEYRREITDRKIQIKGAKSNNLKNVNVDFPLSVLTVVTGVSGSGKSSLVNEILYKALAQKINKSKVKPGNFDEIKGIDQLDKIIDIDQSPIGRTPRSNPATYTGVFDDIRDVFAQTNEAKIRGYQKGRFSFNVKGGRCEACKGDGIIKIEMHFLPDVYVPCEVCDGKRYNRETLEVTYKGKNIADVLEMTVEEATHFFENIPKIKRKLQTLVDVGLGYITLGQQATTLSGGEAQRVKLASELHKRSTGRSIYILDEPTTGLHVDDISRLLKVLNRIVENGDTVVIIEHNLDVIKTADHIIDLGPEGGEGGGTIIATGTPEEIAQNKGSYTGQYLKPVLERDSVE.

33 to 40 contributes to the ATP binding site; it reads GLSGSGKS. The C4-type zinc-finger motif lies at 252-279; it reads CPICGFSIGELEPRMFSFNSPFGACPTC. 2 ABC transporter domains span residues 309–587 and 607–935; these read WEPT…KKSL and ITDR…QYLK. Residue 639–646 coordinates ATP; it reads GVSGSGKS. Residues 738–764 form a C4-type zinc finger; sequence CEACKGDGIIKIEMHFLPDVYVPCEVC.

The protein belongs to the ABC transporter superfamily. UvrA family. As to quaternary structure, forms a heterotetramer with UvrB during the search for lesions.

It is found in the cytoplasm. The UvrABC repair system catalyzes the recognition and processing of DNA lesions. UvrA is an ATPase and a DNA-binding protein. A damage recognition complex composed of 2 UvrA and 2 UvrB subunits scans DNA for abnormalities. When the presence of a lesion has been verified by UvrB, the UvrA molecules dissociate. This Staphylococcus epidermidis (strain ATCC 35984 / DSM 28319 / BCRC 17069 / CCUG 31568 / BM 3577 / RP62A) protein is UvrABC system protein A.